The following is a 228-amino-acid chain: Leucyl/phenylalanyl-tRNA--protein transferase (228 aa).

Belongs to the L/F-transferase family.

It is found in the cytoplasm. The catalysed reaction is N-terminal L-lysyl-[protein] + L-leucyl-tRNA(Leu) = N-terminal L-leucyl-L-lysyl-[protein] + tRNA(Leu) + H(+). It carries out the reaction N-terminal L-arginyl-[protein] + L-leucyl-tRNA(Leu) = N-terminal L-leucyl-L-arginyl-[protein] + tRNA(Leu) + H(+). It catalyses the reaction L-phenylalanyl-tRNA(Phe) + an N-terminal L-alpha-aminoacyl-[protein] = an N-terminal L-phenylalanyl-L-alpha-aminoacyl-[protein] + tRNA(Phe). Functions in the N-end rule pathway of protein degradation where it conjugates Leu, Phe and, less efficiently, Met from aminoacyl-tRNAs to the N-termini of proteins containing an N-terminal arginine or lysine. This Lawsonia intracellularis (strain PHE/MN1-00) protein is Leucyl/phenylalanyl-tRNA--protein transferase.